A 414-amino-acid chain; its full sequence is Cytochrome c biogenesis protein Ccs1 (414 aa).

3 consecutive transmembrane segments (helical) span residues 14 to 34, 73 to 93, and 159 to 179; these read LTVA…GTVI, SWWF…CTIT, and VSPI…MLST.

The protein belongs to the Ccs1/CcsB family. In terms of assembly, may interact with CcsA.

It localises to the plastid. The protein localises to the chloroplast thylakoid membrane. Functionally, required during biogenesis of c-type cytochromes (cytochrome c6 and cytochrome f) at the step of heme attachment. The polypeptide is Cytochrome c biogenesis protein Ccs1 (Guillardia theta (Cryptophyte)).